The sequence spans 343 residues: Ubiquitin carboxyl-terminal hydrolase isozyme L5 (343 aa).

One can recognise a UCH catalytic domain in the interval 6–218 (GWCTIESDPG…IRFNLMAVIK (213 aa)). Cys-83 functions as the Nucleophile in the catalytic mechanism. Catalysis depends on His-157, which acts as the Proton donor. The disordered stretch occupies residues 242–266 (LSELNSGSGGDNKEESGGATPTTKE). The ULD domain maps to 306 to 334 (NFTPLILNLIKGLAEKDNLQPLIQKAKDQ).

This sequence belongs to the peptidase C12 family. In terms of assembly, component of the 19S (PA700) regulatory complex of the 26S proteasome.

The protein localises to the cytoplasm. The protein resides in the nucleus. The catalysed reaction is Thiol-dependent hydrolysis of ester, thioester, amide, peptide and isopeptide bonds formed by the C-terminal Gly of ubiquitin (a 76-residue protein attached to proteins as an intracellular targeting signal).. Protease that specifically cleaves 'Lys-48'-linked polyubiquitin chains. Deubiquitinating enzyme associated with the 19S regulatory subunit of the 26S proteasome. The sequence is that of Ubiquitin carboxyl-terminal hydrolase isozyme L5 (uch2) from Dictyostelium discoideum (Social amoeba).